Consider the following 237-residue polypeptide: MADLQTQMKQAVALAATDQVKNGMVLGLGSGSTAALMIQEVGARLRDGRLTDIVGVTTSFQGEVLAAELGIPLQSLNAIDRIDLAIDGADEVDPAFELIKGGGACHVQEKLVARRAERFVVVVDSTKLVERLNLGFLLPVEVLAGAWRQVQAELQQLGGSAELRMAQRKAGPVVTDQGNLVLDVSFAGGINDPAGLETTINNIPGVLENGLFVGLADQVLVGEINDGVAGVRDLVKS.

Substrate-binding positions include 30–33 (SGST), 87–90 (DGAD), and 100–103 (KGGG). Glu109 functions as the Proton acceptor in the catalytic mechanism. Lys127 contacts substrate.

Belongs to the ribose 5-phosphate isomerase family. In terms of assembly, homodimer.

It carries out the reaction aldehydo-D-ribose 5-phosphate = D-ribulose 5-phosphate. It participates in carbohydrate degradation; pentose phosphate pathway; D-ribose 5-phosphate from D-ribulose 5-phosphate (non-oxidative stage): step 1/1. In terms of biological role, catalyzes the reversible conversion of ribose-5-phosphate to ribulose 5-phosphate. The sequence is that of Ribose-5-phosphate isomerase A from Synechococcus sp. (strain RCC307).